The sequence spans 199 residues: Glycerol-3-phosphate acyltransferase (199 aa).

The next 5 membrane-spanning stretches (helical) occupy residues isoleucine 3–valine 23, valine 55–isoleucine 75, phenylalanine 79–leucine 99, valine 113–phenylalanine 133, and tyrosine 155–isoleucine 175.

It belongs to the PlsY family. As to quaternary structure, probably interacts with PlsX.

Its subcellular location is the cell inner membrane. It catalyses the reaction an acyl phosphate + sn-glycerol 3-phosphate = a 1-acyl-sn-glycero-3-phosphate + phosphate. It functions in the pathway lipid metabolism; phospholipid metabolism. In terms of biological role, catalyzes the transfer of an acyl group from acyl-phosphate (acyl-PO(4)) to glycerol-3-phosphate (G3P) to form lysophosphatidic acid (LPA). This enzyme utilizes acyl-phosphate as fatty acyl donor, but not acyl-CoA or acyl-ACP. This is Glycerol-3-phosphate acyltransferase from Endomicrobium trichonymphae.